Consider the following 775-residue polypeptide: Polyribonucleotide nucleotidyltransferase (775 aa).

Residues 223–247 (DEQVPEKPRKGRRRGRKSSPRKKTD) form a disordered region. The segment covering 231-243 (RKGRRRGRKSSPR) has biased composition (basic residues). 2 residues coordinate Mg(2+): Asp-567 and Asp-573. In terms of domain architecture, KH spans 633 to 692 (PRITTISVPVSKIGEVIGPKGKNINQITEDTGARVSIEDDGTVFISATSGGSAEAAVDRI). The region spanning 704-773 (GERFLGTVVK…NRGKISLVPV (70 aa)) is the S1 motif domain.

It belongs to the polyribonucleotide nucleotidyltransferase family. Requires Mg(2+) as cofactor.

It localises to the cytoplasm. It carries out the reaction RNA(n+1) + phosphate = RNA(n) + a ribonucleoside 5'-diphosphate. Functionally, involved in mRNA degradation. Catalyzes the phosphorolysis of single-stranded polyribonucleotides processively in the 3'- to 5'-direction. In Corynebacterium kroppenstedtii (strain DSM 44385 / JCM 11950 / CIP 105744 / CCUG 35717), this protein is Polyribonucleotide nucleotidyltransferase.